Reading from the N-terminus, the 441-residue chain is Dolichyl-diphosphooligosaccharide--protein glycosyltransferase 48 kDa subunit (441 aa).

Positions M1–S28 are cleaved as a signal peptide. The Lumenal portion of the chain corresponds to G29 to P412. A helical transmembrane segment spans residues Y413–L432. The Cytoplasmic portion of the chain corresponds to H433 to D441.

This sequence belongs to the DDOST 48 kDa subunit family. As to quaternary structure, component of the oligosaccharyltransferase (OST) complex. OST exists in two different complex forms which contain common core subunits RPN1, RPN2, OST48, OST4, DAD1 and TMEM258, either STT3A or STT3B as catalytic subunits, and form-specific accessory subunits. STT3A complex assembly occurs through the formation of 3 subcomplexes. Subcomplex 1 contains RPN1 and TMEM258, subcomplex 2 contains the STT3A-specific subunits STT3A, DC2/OSTC, and KCP2 as well as the core subunit OST4, and subcomplex 3 contains RPN2, DAD1, and OST48. The STT3A complex can form stable complexes with the Sec61 complex or with both the Sec61 and TRAP complexes. Interacts with SMIM22.

It is found in the endoplasmic reticulum membrane. The protein operates within protein modification; protein glycosylation. Functionally, subunit of the oligosaccharyl transferase (OST) complex that catalyzes the initial transfer of a defined glycan (Glc(3)Man(9)GlcNAc(2) in eukaryotes) from the lipid carrier dolichol-pyrophosphate to an asparagine residue within an Asn-X-Ser/Thr consensus motif in nascent polypeptide chains, the first step in protein N-glycosylation. N-glycosylation occurs cotranslationally and the complex associates with the Sec61 complex at the channel-forming translocon complex that mediates protein translocation across the endoplasmic reticulum (ER). All subunits are required for a maximal enzyme activity. Required for the assembly of both SST3A- and SS3B-containing OST complexes. The chain is Dolichyl-diphosphooligosaccharide--protein glycosyltransferase 48 kDa subunit from Rattus norvegicus (Rat).